A 696-amino-acid polypeptide reads, in one-letter code: C2 domain-containing protein 2 (696 aa).

A helical membrane pass occupies residues 8–28; the sequence is VQWLFLVSLFVAALGTVGLYL. Residues 45–238 enclose the SMP-LBD domain; it reads EPDELRRRES…PTQVKEAQSL (194 aa). S54 carries the post-translational modification Phosphoserine. Residues 241–357 form the C2 domain; it reads PSSTAQEPCP…RKQPNGPQTF (117 aa). Position 436 is a phosphoserine (S436). A Phosphothreonine modification is found at T440. The interval 551-611 is disordered; it reads ATEASATTPP…DGDELSESSL (61 aa). Over residues 573–588 the composition is skewed to basic and acidic residues; that stretch reads KPRENDLDSWELEKES. S581 is modified (phosphoserine).

Its subcellular location is the membrane. This chain is C2 domain-containing protein 2, found in Mus musculus (Mouse).